The primary structure comprises 308 residues: Methionyl-tRNA formyltransferase (308 aa).

A (6S)-5,6,7,8-tetrahydrofolate-binding site is contributed by 110-113; the sequence is SLLP.

The protein belongs to the Fmt family.

It carries out the reaction L-methionyl-tRNA(fMet) + (6R)-10-formyltetrahydrofolate = N-formyl-L-methionyl-tRNA(fMet) + (6S)-5,6,7,8-tetrahydrofolate + H(+). Functionally, attaches a formyl group to the free amino group of methionyl-tRNA(fMet). The formyl group appears to play a dual role in the initiator identity of N-formylmethionyl-tRNA by promoting its recognition by IF2 and preventing the misappropriation of this tRNA by the elongation apparatus. This is Methionyl-tRNA formyltransferase from Neisseria meningitidis serogroup C / serotype 2a (strain ATCC 700532 / DSM 15464 / FAM18).